The following is a 349-amino-acid chain: Gibberellin 3-beta-dioxygenase 3 (349 aa).

The region spanning 201–305 (SIQSFLQLNS…RVSAAYFAGP (105 aa)) is the Fe2OG dioxygenase domain. Residues His226, Asp228, and His286 each contribute to the Fe cation site. Arg296 is an active-site residue.

Belongs to the iron/ascorbate-dependent oxidoreductase family. GA3OX subfamily. It depends on L-ascorbate as a cofactor. Fe cation serves as cofactor. Expressed in flower clusters and siliques.

It carries out the reaction gibberellin A20 + 2-oxoglutarate + O2 = gibberellin A1 + succinate + CO2. It participates in plant hormone biosynthesis; gibberellin biosynthesis. Converts the inactive gibberellin (GA) precursors GA9 and GA20 in the bioactives gibberellins GA4 and GA1. Involved in the production of bioactive GA for reproductive development. In Arabidopsis thaliana (Mouse-ear cress), this protein is Gibberellin 3-beta-dioxygenase 3 (GA3OX3).